A 351-amino-acid polypeptide reads, in one-letter code: MSRAPRTAKGETARAEPARHVPVLLAEVLAALALDRPGLAVDGTFGAGGYTRALLESGPDMRVIAIDRDPTAIRAGADLVEGAGGRLRLVQGRFGDLDTLLADQGEAQADWVVLDIGVSSMQLDEAHRGFSFRQDGPLDMRMGGEGPSAADLVNGEEESTLADILYHFGEERRSRAVARAIVEARRRAPIATTAQLADLIAGVVRPEPGSPIHPATRSFQGLRIAVNDELGELVRGLHAAERVLKPGGRLAVVTFHSLEDRIVKQFFSARSGRAAQASRHLPGVERPAPKSFRLVTKGPVLPSEAETEVNPRARSAKLRAGERTDGPAPPPLSAIETLASLPAPQGRGTRR.

S-adenosyl-L-methionine contacts are provided by residues 48–50 (GGY), Asp67, Phe94, Asp115, and Gln122. The tract at residues 298-351 (GPVLPSEAETEVNPRARSAKLRAGERTDGPAPPPLSAIETLASLPAPQGRGTRR) is disordered.

This sequence belongs to the methyltransferase superfamily. RsmH family.

The protein resides in the cytoplasm. It carries out the reaction cytidine(1402) in 16S rRNA + S-adenosyl-L-methionine = N(4)-methylcytidine(1402) in 16S rRNA + S-adenosyl-L-homocysteine + H(+). In terms of biological role, specifically methylates the N4 position of cytidine in position 1402 (C1402) of 16S rRNA. The chain is Ribosomal RNA small subunit methyltransferase H from Methylorubrum populi (strain ATCC BAA-705 / NCIMB 13946 / BJ001) (Methylobacterium populi).